We begin with the raw amino-acid sequence, 143 residues long: Transcription antitermination protein NusB (143 aa).

It belongs to the NusB family.

Functionally, involved in transcription antitermination. Required for transcription of ribosomal RNA (rRNA) genes. Binds specifically to the boxA antiterminator sequence of the ribosomal RNA (rrn) operons. The polypeptide is Transcription antitermination protein NusB (Desulforamulus reducens (strain ATCC BAA-1160 / DSM 100696 / MI-1) (Desulfotomaculum reducens)).